The primary structure comprises 78 residues: Small ribosomal subunit protein bS18B (78 aa).

The interval Met-1 to Gly-22 is disordered.

Belongs to the bacterial ribosomal protein bS18 family. As to quaternary structure, part of the 30S ribosomal subunit. Forms a tight heterodimer with protein bS6.

In terms of biological role, binds as a heterodimer with protein bS6 to the central domain of the 16S rRNA, where it helps stabilize the platform of the 30S subunit. This Streptomyces avermitilis (strain ATCC 31267 / DSM 46492 / JCM 5070 / NBRC 14893 / NCIMB 12804 / NRRL 8165 / MA-4680) protein is Small ribosomal subunit protein bS18B.